A 1215-amino-acid polypeptide reads, in one-letter code: Metabotropic glycine receptor (1215 aa).

The N-terminal stretch at 1–23 (MGAMAYPLLLCLLLAQLGLGAVG) is a signal peptide. The disordered stretch occupies residues 23 to 66 (GASRDPQGRPDSPRERTPKGKPHAQQPGRASASDSSAPWSRSTD). At 24–417 (ASRDPQGRPD…CFVQEDKYLR (394 aa)) the chain is on the extracellular side. Residues 28 to 40 (PQGRPDSPRERTP) are compositionally biased toward basic and acidic residues. Residues 52 to 64 (ASASDSSAPWSRS) are compositionally biased toward low complexity. The cache-like region stretch occupies residues 85–281 (YLYTGDSHQL…CENGSYKPGW (197 aa)). N-linked (GlcNAc...) asparagine glycans are attached at residues asparagine 98 and asparagine 143. Residues cysteine 99 and cysteine 272 are joined by a disulfide bond. Serine 172 and arginine 173 together coordinate glycine. Asparagine 215 carries an N-linked (GlcNAc...) asparagine glycan. Glutamate 271 contacts glycine. Residue asparagine 274 is glycosylated (N-linked (GlcNAc...) asparagine). Aspartate 307 is a binding site for glycine. Asparagine 333 carries an N-linked (GlcNAc...) asparagine glycan. The chain crosses the membrane as a helical span at residues 418–439 (LAIISFQALCMLLDFVSMLVVY). Topologically, residues 440-451 (HFRKAKSIRASG) are cytoplasmic. A helical transmembrane segment spans residues 452–474 (LILLETILFGSLLLYFPVVILYF). Topologically, residues 475–478 (EPST) are extracellular. The chain crosses the membrane as a helical span at residues 479–501 (FRCILLRWARLLGFATVYGTVTL). Cysteine 481 and cysteine 573 are joined by a disulfide. Residues 502–525 (KLHRVLKVFLSRTAQRIPYMTGGR) are Cytoplasmic-facing. The helical transmembrane segment at 526-547 (VMRMLAVILLVVFWFLIGWTSS) threads the bilayer. At 548 to 576 (VCQNLEKQISLIGQGKTSDHLIFNMCLID) the chain is on the extracellular side. Residues 577–597 (RWDYMTAVAEFLFLLWGVYLC) form a helical membrane-spanning segment. The Cytoplasmic portion of the chain corresponds to 598 to 611 (YAVRTVPSAFHEPR). The helical transmembrane segment at 612–633 (YMAVAVHNELIISAIFHTIRFV) threads the bilayer. Residues 634–642 (LASRLQSDW) lie on the Extracellular side of the membrane. The helical transmembrane segment at 643-664 (MLMLYFAHTHLTVTVTIGLLLI) threads the bilayer. The Cytoplasmic portion of the chain corresponds to 665-1215 (PKFSHSSNNP…KEEIWDSFKV (551 aa)). A phosphoserine mark is found at serine 694, serine 705, and serine 708. A disordered region spans residues 757 to 999 (RITEIPETVS…LNPGTTQMKD (243 aa)). 2 stretches are compositionally biased toward basic and acidic residues: residues 769–781 (CSKEDKEGADHGT) and 819–828 (STYDHVRDQT). Lysine 774 participates in a covalent cross-link: Glycyl lysine isopeptide (Lys-Gly) (interchain with G-Cter in ubiquitin). Serine 865 is subject to Phosphoserine. The segment covering 925–943 (VEERTKSQKPLPKDKETNR) has biased composition (basic and acidic residues). A Phosphoserine modification is found at serine 946. Over residues 979-998 (QRVNPTTANSDLNPGTTQMK) the composition is skewed to polar residues. Short sequence motifs (VCPWE motif) lie at residues 1006–1010 (VCPWE) and 1071–1075 (VCLWE). Serine 1080 is modified (phosphoserine). The segment at 1117 to 1164 (SEELPPKAVASKTENENLNQIGHQEKKTSSSEENVRGSYNSSNNFQQP) is disordered. Residues 1139-1151 (HQEKKTSSSEENV) show a composition bias toward basic and acidic residues. The span at 1153–1164 (GSYNSSNNFQQP) shows a compositional bias: polar residues. A VCPWE motif 3 motif is present at residues 1171–1175 (VCPWE).

The protein belongs to the G-protein coupled receptor 3 family. As to quaternary structure, homodimer. Associates with the RGS7-GNB5 complex, promoting its localization to the cell membrane and regulating its GTPase activator activity. Interacts (via VCPWE motifs) with GNAO1. Interacts with GPC4. Interacts with EGFLAM.

The protein localises to the cell membrane. It is found in the postsynaptic cell membrane. Its subcellular location is the presynaptic cell membrane. The protein resides in the nucleus. Metabotropic receptor for glycine that controls synapse formation and function in the brain. Acts as an atypical G-protein coupled receptor that recruits and regulates the RGS7-GNB5 complex instead of activating G proteins. In absence of glycine ligand, promotes the GTPase activator activity of RGS7, increasing the GTPase activity of G protein alpha subunits, thereby driving them into their inactive GDP-bound form. Glycine-binding changes the conformation of the intracellular surface, inhibiting the GTPase activator activity of the RGS7-GNB5 complex, promoting G protein alpha subunits into their active GTP-bound form and regulating cAMP levels. Also able to bind taurine, a compound closely related to glycine, but with a two-fold lower affinity. Glycine receptor-dependent regulation of cAMP controls key ion channels, kinases and neurotrophic factors involved in neuronal excitability and synaptic transmission. Plays a pivotal role in regulating mood and cognition via its ability to regulate neuronal excitability in L2/L3 pyramidal neurons of the prefrontal cortex. Also involved in spatial learning by regulating hippocampal CA1 neuronal excitability. Acts as a synaptic organizer in the hippocampus, required for proper mossy fiber-CA3 neurocircuitry establishment, structure and function: induces presynaptic differentiation in contacting axons via its interaction with GPC4. In addition to glycine, may also act as a receptor for osteocalcin (BGLAP) hormone: osteocalcin-binding initiates a signaling response that prevents neuronal apoptosis in the hippocampus and regulates the synthesis of neurotransmitters. The chain is Metabotropic glycine receptor from Homo sapiens (Human).